The primary structure comprises 81 residues: Sulfur carrier protein TusA (81 aa).

Catalysis depends on Cys19, which acts as the Cysteine persulfide intermediate.

The protein belongs to the sulfur carrier protein TusA family.

It is found in the cytoplasm. Sulfur carrier protein which probably makes part of a sulfur-relay system. The protein is Sulfur carrier protein TusA of Shewanella baltica (strain OS185).